Reading from the N-terminus, the 471-residue chain is uncharacterized protein (471 aa).

The tract at residues 13 to 57 is disordered; the sequence is KGGATIGATPMESDSSVSALSGSSASKVSRRGRRRSHLASKSSAP. Positions 27–39 are enriched in low complexity; sequence SSVSALSGSSASK. Over residues 40–50 the composition is skewed to basic residues; sequence VSRRGRRRSHL. 2 consecutive CCHC-type zinc fingers follow at residues 397-414 and 417-434; these read YACH…ECRQ and SVCR…KCQN. Residues 438–457 are gag-like cysteine motif; it reads CRNCRHRGQPSGHYMLSNAC.

The protein to corresponding ORF of B.mori (R1BM).

This is an uncharacterized protein from Drosophila melanogaster (Fruit fly).